The chain runs to 156 residues: ATP synthase subunit b (156 aa).

Residues 11–31 (AIAFVLFVIFCMKYVWPPIMA) traverse the membrane as a helical segment.

This sequence belongs to the ATPase B chain family. In terms of assembly, F-type ATPases have 2 components, F(1) - the catalytic core - and F(0) - the membrane proton channel. F(1) has five subunits: alpha(3), beta(3), gamma(1), delta(1), epsilon(1). F(0) has three main subunits: a(1), b(2) and c(10-14). The alpha and beta chains form an alternating ring which encloses part of the gamma chain. F(1) is attached to F(0) by a central stalk formed by the gamma and epsilon chains, while a peripheral stalk is formed by the delta and b chains.

The protein resides in the cell inner membrane. In terms of biological role, f(1)F(0) ATP synthase produces ATP from ADP in the presence of a proton or sodium gradient. F-type ATPases consist of two structural domains, F(1) containing the extramembraneous catalytic core and F(0) containing the membrane proton channel, linked together by a central stalk and a peripheral stalk. During catalysis, ATP synthesis in the catalytic domain of F(1) is coupled via a rotary mechanism of the central stalk subunits to proton translocation. Component of the F(0) channel, it forms part of the peripheral stalk, linking F(1) to F(0). The chain is ATP synthase subunit b from Yersinia pseudotuberculosis serotype O:1b (strain IP 31758).